The primary structure comprises 725 residues: Sodium/hydrogen exchanger 7 (725 aa).

The segment at 1–20 (MEPGDAARPGSGRATGAPPP) is disordered. The Cytoplasmic segment spans residues 1 to 21 (MEPGDAARPGSGRATGAPPPR). Residues 22–42 (LLLLPLLLGWGLRVAAAASAS) form a helical membrane-spanning segment. At 43 to 70 (SSGAAAEDSSAMEELATEKEAEESHRQD) the chain is on the lumenal side. Residues 71-91 (SVSLLTFILLLTLTILTIWLF) form a helical membrane-spanning segment. Topologically, residues 92–95 (KHRR) are cytoplasmic. The chain crosses the membrane as a helical span at residues 96–116 (VRFLHETGLAMIYGLIVGVIL). The Lumenal portion of the chain corresponds to 117–175 (RYGTPATSGRDKSLSCTQEDRAFSTLLVNVSGKFFEYTLKGEISPGKINSVEQNDMLRK). An N-linked (GlcNAc...) asparagine glycan is attached at Asn-145. The chain crosses the membrane as a helical span at residues 176–196 (VTFDPEVFFNILLPPIIFHAG). Residues 197-210 (YSLKKRHFFRNLGS) lie on the Cytoplasmic side of the membrane. Residues 211 to 231 (ILAYAFLGTAVSCFIIGNLMY) traverse the membrane as a helical segment. Residues 232–251 (GVVKLMKIMGQLSDKFYYTD) are Lumenal-facing. Residues 252 to 272 (CLFFGAIISATDPVTVLAIFN) traverse the membrane as a helical segment. The Cytoplasmic segment spans residues 273–277 (ELHAD). A helical membrane pass occupies residues 278–298 (VDLYALLFGESVLNDAVAIVL). At 299 to 322 (SSSIVAYQPAGLNTHAFDAAAFFK) the chain is on the lumenal side. The helical transmembrane segment at 323–343 (SVGIFLGIFSGSFTMGAVTGV) threads the bilayer. Residues 344–349 (NANVTK) lie on the Cytoplasmic side of the membrane. 2 consecutive transmembrane segments (helical) span residues 350-370 (FTKL…MSWS) and 371-391 (TFLL…FCGI). At 392-414 (TQAHYTYNNLSVESRSRTKQLFE) the chain is on the cytoplasmic side. A helical membrane pass occupies residues 415-435 (VLHFLAENFIFSYMGLALFTF). Over 436–442 (QKHVFSP) the chain is Lumenal. The chain crosses the membrane as a helical span at residues 443 to 463 (IFIIGAFVAIFLGRAAHIYPL). Topologically, residues 464-474 (SFFLNLGRRHK) are cytoplasmic. Residues 475 to 497 (IGWNFQHMMMFSGLRGAMAFALA) traverse the membrane as a helical segment. At 498–513 (IRDTASYARQMMFTTT) the chain is on the lumenal side. The helical transmembrane segment at 514–534 (LLIVFFTVWIIGGGTTPMLSW) threads the bilayer. Required for trans-Golgi network localization regions lie at residues 533-559 (SWLN…YFRV) and 563-568 (PDQDPP). Over 535-725 (LNIRVGVEEP…RLVFPLEDNA (191 aa)) the chain is Cytoplasmic. The residue at position 545 (Ser-545) is a Phosphoserine. Disordered stretches follow at residues 567 to 590 (PPPN…GNRT) and 669 to 714 (TVTA…SSRG). Positions 675–684 (SSSSHTASTS) are enriched in low complexity. The segment covering 687-704 (GSRRTKSSSEEVLERDLG) has biased composition (basic and acidic residues).

This sequence belongs to the monovalent cation:proton antiporter 1 (CPA1) transporter (TC 2.A.36) family. In terms of assembly, interacts with SCAMP1, SCAMP2 and SCAMP5; may participate in its shuttling from trans-Golgi network to recycling endosomes. In terms of processing, N-glycosylated. Ubiquitously expressed.

It localises to the golgi apparatus. Its subcellular location is the trans-Golgi network membrane. The protein localises to the recycling endosome membrane. The protein resides in the cell membrane. The catalysed reaction is Na(+)(in) + H(+)(out) = Na(+)(out) + H(+)(in). The enzyme catalyses K(+)(in) + H(+)(out) = K(+)(out) + H(+)(in). With respect to regulation, inhibited by benzamil and quinine but not by amiloride. Functionally, golgi Na(+), K(+)/(H+) antiporter. Mediates the electoneutral influx of Na(+) or K(+) in exchange for H(+). May contribute to the regulation of Golgi apparatus volume and pH. The chain is Sodium/hydrogen exchanger 7 (SLC9A7) from Homo sapiens (Human).